Here is a 176-residue protein sequence, read N- to C-terminus: ATP-dependent protease subunit HslV (176 aa).

Residue Thr-2 is part of the active site. Positions 157, 160, and 163 each coordinate Na(+).

This sequence belongs to the peptidase T1B family. HslV subfamily. As to quaternary structure, a double ring-shaped homohexamer of HslV is capped on each side by a ring-shaped HslU homohexamer. The assembly of the HslU/HslV complex is dependent on binding of ATP.

It is found in the cytoplasm. The enzyme catalyses ATP-dependent cleavage of peptide bonds with broad specificity.. Allosterically activated by HslU binding. Its function is as follows. Protease subunit of a proteasome-like degradation complex believed to be a general protein degrading machinery. In Buchnera aphidicola subsp. Schizaphis graminum (strain Sg), this protein is ATP-dependent protease subunit HslV.